The sequence spans 321 residues: MKTMESVRLISGSAHPQFAELLSKGMNIELSKCESKHFLNGETSVILGESVRSASVYIIQPTCSPNVNDNIMELLVLVDAVRRASSKHITAVIPFFGYGKQNKKEKSREPITGKLIANLIETSGVDRVISMDLEASQIQGFFNIPVDNLYAEPLIVKYIEKHYKHLGEKVVISPAVDGVKRAKLVSDKLNCDLAILDRQTKGDKEDMILVGDVSGKVAIIIGSIADTCETLALSAKILKSKGATNVFALVSHGELSGNAIETLNNSELEELVITNSIPQTEKSKQCPKLKIINVTPMFCEALKRIIHGESITAASSKFVIL.

Mg(2+)-binding residues include Asp-132 and Asp-147. Positions 214–229 are binding of phosphoribosylpyrophosphate; sequence SGKVAIIIGSIADTCE.

The protein belongs to the ribose-phosphate pyrophosphokinase family. Mg(2+) serves as cofactor.

Its subcellular location is the cytoplasm. The enzyme catalyses D-ribose 5-phosphate + ATP = 5-phospho-alpha-D-ribose 1-diphosphate + AMP + H(+). Its pathway is metabolic intermediate biosynthesis; 5-phospho-alpha-D-ribose 1-diphosphate biosynthesis; 5-phospho-alpha-D-ribose 1-diphosphate from D-ribose 5-phosphate (route I): step 1/1. The protein is Ribose-phosphate pyrophosphokinase C (prsC) of Dictyostelium discoideum (Social amoeba).